The following is a 190-amino-acid chain: Recombination protein RecR (190 aa).

The C4-type zinc finger occupies 58–73 (CGQCGALSENELCEIC). The 87-residue stretch at 81-167 (NILCIVESPK…TFSKIAQGIP (87 aa)) folds into the Toprim domain.

The protein belongs to the RecR family.

In terms of biological role, may play a role in DNA repair. It seems to be involved in an RecBC-independent recombinational process of DNA repair. It may act with RecF and RecO. The protein is Recombination protein RecR of Campylobacter jejuni subsp. jejuni serotype O:6 (strain 81116 / NCTC 11828).